A 276-amino-acid polypeptide reads, in one-letter code: Elongation factor Ts, mitochondrial (276 aa).

The protein belongs to the EF-Ts family.

Its subcellular location is the mitochondrion. Functionally, associates with the EF-Tu.GDP complex and induces the exchange of GDP to GTP. It remains bound to the aminoacyl-tRNA.EF-Tu.GTP complex up to the GTP hydrolysis stage on the ribosome. The polypeptide is Elongation factor Ts, mitochondrial (Leishmania infantum).